We begin with the raw amino-acid sequence, 255 residues long: Small ribosomal subunit protein uS2 (255 aa).

Belongs to the universal ribosomal protein uS2 family.

The protein is Small ribosomal subunit protein uS2 of Streptococcus pyogenes serotype M49 (strain NZ131).